We begin with the raw amino-acid sequence, 84 residues long: Small ribosomal subunit protein bS20 (84 aa).

The disordered stretch occupies residues 1–32 (MPRHESAKKRMRQNEKRQKRNKSQKSRVRTKI).

Belongs to the bacterial ribosomal protein bS20 family.

Its function is as follows. Binds directly to 16S ribosomal RNA. The sequence is that of Small ribosomal subunit protein bS20 from Salinibacter ruber (strain DSM 13855 / M31).